The following is a 411-amino-acid chain: Adenylosuccinate synthetase (411 aa).

Residues 11 to 17 (GDEGKGK) and 39 to 41 (GHT) each bind GTP. D12 serves as the catalytic Proton acceptor. Residues D12 and G39 each contribute to the Mg(2+) site. IMP is bound by residues 12–15 (DEGK), 37–40 (NAGH), T121, R135, Q215, T230, and R294. Catalysis depends on H40, which acts as the Proton donor. 290 to 296 (TTTKRPR) is a binding site for substrate. GTP contacts are provided by residues R296, 322–324 (KLD), and 400–402 (STS).

The protein belongs to the adenylosuccinate synthetase family. As to quaternary structure, homodimer. Mg(2+) serves as cofactor.

It is found in the cytoplasm. The enzyme catalyses IMP + L-aspartate + GTP = N(6)-(1,2-dicarboxyethyl)-AMP + GDP + phosphate + 2 H(+). It participates in purine metabolism; AMP biosynthesis via de novo pathway; AMP from IMP: step 1/2. Functionally, plays an important role in the de novo pathway of purine nucleotide biosynthesis. Catalyzes the first committed step in the biosynthesis of AMP from IMP. The protein is Adenylosuccinate synthetase of Helicobacter pylori (strain J99 / ATCC 700824) (Campylobacter pylori J99).